A 287-amino-acid chain; its full sequence is uncharacterized protein (287 aa).

This is an uncharacterized protein from Mycoplasma genitalium (strain ATCC 33530 / DSM 19775 / NCTC 10195 / G37) (Mycoplasmoides genitalium).